A 157-amino-acid polypeptide reads, in one-letter code: Transcription elongation factor GreB (157 aa).

Belongs to the GreA/GreB family. GreB subfamily.

Functionally, necessary for efficient RNA polymerase transcription elongation past template-encoded arresting sites. The arresting sites in DNA have the property of trapping a certain fraction of elongating RNA polymerases that pass through, resulting in locked ternary complexes. Cleavage of the nascent transcript by cleavage factors such as GreA or GreB allows the resumption of elongation from the new 3'terminus. GreB releases sequences of up to 9 nucleotides in length. The sequence is that of Transcription elongation factor GreB from Salmonella typhimurium (strain LT2 / SGSC1412 / ATCC 700720).